Consider the following 149-residue polypeptide: Large ribosomal subunit protein uL13 (149 aa).

Belongs to the universal ribosomal protein uL13 family. Part of the 50S ribosomal subunit.

In terms of biological role, this protein is one of the early assembly proteins of the 50S ribosomal subunit, although it is not seen to bind rRNA by itself. It is important during the early stages of 50S assembly. The protein is Large ribosomal subunit protein uL13 of Gemmatimonas aurantiaca (strain DSM 14586 / JCM 11422 / NBRC 100505 / T-27).